The primary structure comprises 461 residues: Cysteine--tRNA ligase (461 aa).

A Zn(2+)-binding site is contributed by Cys-28. Residues 30–40 (ITIYDLCHIGH) carry the 'HIGH' region motif. Positions 209, 234, and 238 each coordinate Zn(2+). Positions 266 to 270 (KMSKS) match the 'KMSKS' region motif. Position 269 (Lys-269) interacts with ATP.

Belongs to the class-I aminoacyl-tRNA synthetase family. As to quaternary structure, monomer. Zn(2+) serves as cofactor.

It is found in the cytoplasm. The catalysed reaction is tRNA(Cys) + L-cysteine + ATP = L-cysteinyl-tRNA(Cys) + AMP + diphosphate. In Yersinia pseudotuberculosis serotype O:3 (strain YPIII), this protein is Cysteine--tRNA ligase.